The chain runs to 201 residues: Glycerol-3-phosphate acyltransferase (201 aa).

Helical transmembrane passes span 5–25 (LLGA…FGVV), 55–75 (KMGV…ILVA), 88–108 (WVTA…WLGF), 118–138 (LGIF…GYAV), and 164–184 (TYGP…LIFL).

It belongs to the PlsY family. Probably interacts with PlsX.

The protein localises to the cell inner membrane. It catalyses the reaction an acyl phosphate + sn-glycerol 3-phosphate = a 1-acyl-sn-glycero-3-phosphate + phosphate. Its pathway is lipid metabolism; phospholipid metabolism. In terms of biological role, catalyzes the transfer of an acyl group from acyl-phosphate (acyl-PO(4)) to glycerol-3-phosphate (G3P) to form lysophosphatidic acid (LPA). This enzyme utilizes acyl-phosphate as fatty acyl donor, but not acyl-CoA or acyl-ACP. The chain is Glycerol-3-phosphate acyltransferase from Anaeromyxobacter sp. (strain K).